The chain runs to 459 residues: ATP synthase subunit beta (459 aa).

148–155 (GGAGVGKT) serves as a coordination point for ATP.

The protein belongs to the ATPase alpha/beta chains family. In terms of assembly, F-type ATPases have 2 components, CF(1) - the catalytic core - and CF(0) - the membrane proton channel. CF(1) has five subunits: alpha(3), beta(3), gamma(1), delta(1), epsilon(1). CF(0) has three main subunits: a(1), b(2) and c(9-12). The alpha and beta chains form an alternating ring which encloses part of the gamma chain. CF(1) is attached to CF(0) by a central stalk formed by the gamma and epsilon chains, while a peripheral stalk is formed by the delta and b chains.

It localises to the cell inner membrane. It carries out the reaction ATP + H2O + 4 H(+)(in) = ADP + phosphate + 5 H(+)(out). Produces ATP from ADP in the presence of a proton gradient across the membrane. The catalytic sites are hosted primarily by the beta subunits. The polypeptide is ATP synthase subunit beta (Burkholderia mallei (strain NCTC 10229)).